The sequence spans 269 residues: tRNA pseudouridine synthase A (269 aa).

Residue aspartate 51 is the Nucleophile of the active site. Residue tyrosine 109 coordinates substrate.

Belongs to the tRNA pseudouridine synthase TruA family. Homodimer.

The catalysed reaction is uridine(38/39/40) in tRNA = pseudouridine(38/39/40) in tRNA. Formation of pseudouridine at positions 38, 39 and 40 in the anticodon stem and loop of transfer RNAs. The chain is tRNA pseudouridine synthase A from Histophilus somni (strain 129Pt) (Haemophilus somnus).